The primary structure comprises 298 residues: Lipoyl synthase (298 aa).

Cysteine 40, cysteine 45, cysteine 51, cysteine 67, cysteine 71, cysteine 74, and serine 280 together coordinate [4Fe-4S] cluster. One can recognise a Radical SAM core domain in the interval 53 to 269 (AVRRTATFMI…KEIALSKGFS (217 aa)).

It belongs to the radical SAM superfamily. Lipoyl synthase family. [4Fe-4S] cluster serves as cofactor.

It localises to the cytoplasm. The catalysed reaction is [[Fe-S] cluster scaffold protein carrying a second [4Fe-4S](2+) cluster] + N(6)-octanoyl-L-lysyl-[protein] + 2 oxidized [2Fe-2S]-[ferredoxin] + 2 S-adenosyl-L-methionine + 4 H(+) = [[Fe-S] cluster scaffold protein] + N(6)-[(R)-dihydrolipoyl]-L-lysyl-[protein] + 4 Fe(3+) + 2 hydrogen sulfide + 2 5'-deoxyadenosine + 2 L-methionine + 2 reduced [2Fe-2S]-[ferredoxin]. The protein operates within protein modification; protein lipoylation via endogenous pathway; protein N(6)-(lipoyl)lysine from octanoyl-[acyl-carrier-protein]. Catalyzes the radical-mediated insertion of two sulfur atoms into the C-6 and C-8 positions of the octanoyl moiety bound to the lipoyl domains of lipoate-dependent enzymes, thereby converting the octanoylated domains into lipoylated derivatives. The polypeptide is Lipoyl synthase (Geobacillus kaustophilus (strain HTA426)).